The chain runs to 311 residues: Probable manganese-dependent inorganic pyrophosphatase (311 aa).

Residues H9, D13, D15, D75, H97, and D149 each coordinate Mn(2+).

Belongs to the PPase class C family. The cofactor is Mn(2+).

The protein localises to the cytoplasm. The catalysed reaction is diphosphate + H2O = 2 phosphate + H(+). This Lactobacillus delbrueckii subsp. bulgaricus (strain ATCC BAA-365 / Lb-18) protein is Probable manganese-dependent inorganic pyrophosphatase.